The primary structure comprises 145 residues: 3-hydroxyacyl-[acyl-carrier-protein] dehydratase FabZ (145 aa).

Residue histidine 48 is part of the active site.

The protein belongs to the thioester dehydratase family. FabZ subfamily.

The protein localises to the cytoplasm. It carries out the reaction a (3R)-hydroxyacyl-[ACP] = a (2E)-enoyl-[ACP] + H2O. Its function is as follows. Involved in unsaturated fatty acids biosynthesis. Catalyzes the dehydration of short chain beta-hydroxyacyl-ACPs and long chain saturated and unsaturated beta-hydroxyacyl-ACPs. This is 3-hydroxyacyl-[acyl-carrier-protein] dehydratase FabZ from Stutzerimonas stutzeri (strain A1501) (Pseudomonas stutzeri).